The primary structure comprises 478 residues: Divinyl ether synthase CYP74D1 (478 aa).

Cysteine 431 is a binding site for heme.

This sequence belongs to the cytochrome P450 family. 9-divinyl ether synthase subfamily. In terms of tissue distribution, expressed in roots. Detected in stems, but not in flower buds, petioles, cotyledons or leaves.

The catalysed reaction is (9S)-hydroperoxy-(10E,12Z)-octadecadienoate = colneleate + H2O. It catalyses the reaction (9S)-hydroperoxy-(10E,12Z,15Z)-octadecatrienoate = colnelenate + H2O. In terms of biological role, involved in the biosynthesis of the anti-fungal toxins colneleate and colnelenate. Can use (9S)-hydroperoxy-(10E,12Z)-octadecadienoate (9-HPOD) and (9S)-hydroperoxy-(10E,12Z,15Z)-octadecatrienoate (9-HPOT) as substrates, but has a very low activity with the corresponding 13-hydroperoxides (13-HPOD and 13-POT). In Solanum lycopersicum (Tomato), this protein is Divinyl ether synthase CYP74D1.